The primary structure comprises 217 residues: ATP-dependent Clp protease proteolytic subunit 2 (217 aa).

The active-site Nucleophile is the Ser121. The active site involves His146.

This sequence belongs to the peptidase S14 family. As to quaternary structure, fourteen ClpP subunits assemble into 2 heptameric rings which stack back to back to give a disk-like structure with a central cavity, resembling the structure of eukaryotic proteasomes.

It localises to the cytoplasm. It catalyses the reaction Hydrolysis of proteins to small peptides in the presence of ATP and magnesium. alpha-casein is the usual test substrate. In the absence of ATP, only oligopeptides shorter than five residues are hydrolyzed (such as succinyl-Leu-Tyr-|-NHMec, and Leu-Tyr-Leu-|-Tyr-Trp, in which cleavage of the -Tyr-|-Leu- and -Tyr-|-Trp bonds also occurs).. Functionally, cleaves peptides in various proteins in a process that requires ATP hydrolysis. Has a chymotrypsin-like activity. Plays a major role in the degradation of misfolded proteins. This chain is ATP-dependent Clp protease proteolytic subunit 2, found in Paraburkholderia xenovorans (strain LB400).